A 121-amino-acid chain; its full sequence is Large ribosomal subunit protein uL18 (121 aa).

The protein belongs to the universal ribosomal protein uL18 family. Part of the 50S ribosomal subunit; part of the 5S rRNA/L5/L18/L25 subcomplex. Contacts the 5S and 23S rRNAs.

In terms of biological role, this is one of the proteins that bind and probably mediate the attachment of the 5S RNA into the large ribosomal subunit, where it forms part of the central protuberance. This chain is Large ribosomal subunit protein uL18, found in Spiroplasma kunkelii.